The following is a 155-amino-acid chain: Small ribosomal subunit protein uS7cz/uS7cy (155 aa).

Belongs to the universal ribosomal protein uS7 family. As to quaternary structure, part of the 30S ribosomal subunit.

It is found in the plastid. Functionally, one of the primary rRNA binding proteins, it binds directly to 16S rRNA where it nucleates assembly of the head domain of the 30S subunit. This is Small ribosomal subunit protein uS7cz/uS7cy (rps7-A) from Epifagus virginiana (Beechdrops).